Here is a 251-residue protein sequence, read N- to C-terminus: Transcription initiation factor TFIID subunit 9B (251 aa).

Position 1 is an N-acetylmethionine (Met1). A Phosphoserine modification is found at Ser147. 2 positions are modified to phosphothreonine: Thr159 and Thr174. Ser177 carries the post-translational modification Phosphoserine. Positions Gln229 to Met251 are disordered.

Belongs to the TAF9 family. In terms of assembly, binds TAF5 and TAF6. Component of TFIID and the TATA-binding protein-free TAF complex (TFTC). TFIID is composed of TATA binding protein (TBP) and a number of TBP-associated factors (TAFs). Binds N-terminal domain of p53/TP53 which is essential for transcription.

The protein localises to the nucleus. Functionally, essential for cell viability. TAF9 and TAF9B are involved in transcriptional activation as well as repression of distinct but overlapping sets of genes. May have a role in gene regulation associated with apoptosis. TAFs are components of the transcription factor IID (TFIID) complex, the TBP-free TAFII complex (TFTC), the PCAF histone acetylase complex and the STAGA transcription coactivator-HAT complex. TFIID or TFTC are essential for the regulation of RNA polymerase II-mediated transcription. In Homo sapiens (Human), this protein is Transcription initiation factor TFIID subunit 9B (TAF9B).